The chain runs to 79 residues: Small ribosomal subunit protein bS18 (79 aa).

It belongs to the bacterial ribosomal protein bS18 family. Part of the 30S ribosomal subunit. Forms a tight heterodimer with protein bS6.

Functionally, binds as a heterodimer with protein bS6 to the central domain of the 16S rRNA, where it helps stabilize the platform of the 30S subunit. This Streptococcus pyogenes serotype M5 (strain Manfredo) protein is Small ribosomal subunit protein bS18.